A 243-amino-acid chain; its full sequence is tRNA (guanine-N(1)-)-methyltransferase (243 aa).

S-adenosyl-L-methionine is bound by residues G112 and 131–136 (LGDYVL).

It belongs to the RNA methyltransferase TrmD family. As to quaternary structure, homodimer.

The protein localises to the cytoplasm. The enzyme catalyses guanosine(37) in tRNA + S-adenosyl-L-methionine = N(1)-methylguanosine(37) in tRNA + S-adenosyl-L-homocysteine + H(+). Its function is as follows. Specifically methylates guanosine-37 in various tRNAs. This Leuconostoc mesenteroides subsp. mesenteroides (strain ATCC 8293 / DSM 20343 / BCRC 11652 / CCM 1803 / JCM 6124 / NCDO 523 / NBRC 100496 / NCIMB 8023 / NCTC 12954 / NRRL B-1118 / 37Y) protein is tRNA (guanine-N(1)-)-methyltransferase.